A 250-amino-acid polypeptide reads, in one-letter code: Small ribosomal subunit protein uS3 (250 aa).

In terms of domain architecture, KH type-2 spans 39-111; the sequence is IRQLINNFSK…DINLNILEVK (73 aa).

Belongs to the universal ribosomal protein uS3 family. In terms of assembly, part of the 30S ribosomal subunit. Forms a tight complex with proteins S10 and S14.

Functionally, binds the lower part of the 30S subunit head. Binds mRNA in the 70S ribosome, positioning it for translation. The polypeptide is Small ribosomal subunit protein uS3 (Phytoplasma australiense).